Here is a 188-residue protein sequence, read N- to C-terminus: Elongation factor P (188 aa).

Lysine 34 is modified (N6-(3,6-diaminohexanoyl)-5-hydroxylysine).

The protein belongs to the elongation factor P family. Post-translationally, may be beta-lysylated on the epsilon-amino group of Lys-34 by the combined action of EpmA and EpmB, and then hydroxylated on the C5 position of the same residue by EpmC (if this protein is present). Lysylation is critical for the stimulatory effect of EF-P on peptide-bond formation. The lysylation moiety may extend toward the peptidyltransferase center and stabilize the terminal 3-CCA end of the tRNA. Hydroxylation of the C5 position on Lys-34 may allow additional potential stabilizing hydrogen-bond interactions with the P-tRNA.

It is found in the cytoplasm. The protein operates within protein biosynthesis; polypeptide chain elongation. In terms of biological role, involved in peptide bond synthesis. Alleviates ribosome stalling that occurs when 3 or more consecutive Pro residues or the sequence PPG is present in a protein, possibly by augmenting the peptidyl transferase activity of the ribosome. Modification of Lys-34 is required for alleviation. The polypeptide is Elongation factor P (Erwinia tasmaniensis (strain DSM 17950 / CFBP 7177 / CIP 109463 / NCPPB 4357 / Et1/99)).